The chain runs to 293 residues: NAD-dependent protein deacetylase (293 aa).

The Deacetylase sirtuin-type domain occupies 1 to 284; the sequence is MTVAITQTGP…QPPDPLHTAT (284 aa). NAD(+) contacts are provided by residues 27-47 and 105-108; these read GAGC…GGWK and QNVD. His123 acts as the Proton acceptor in catalysis. Residues Cys131, Cys134, Cys182, and Cys185 each contribute to the Zn(2+) site. NAD(+) is bound by residues 222 to 224, 248 to 250, and Cys266; these read GSS and NFG.

The protein belongs to the sirtuin family. Class II subfamily. Zn(2+) is required as a cofactor.

The protein resides in the cytoplasm. The catalysed reaction is N(6)-acetyl-L-lysyl-[protein] + NAD(+) + H2O = 2''-O-acetyl-ADP-D-ribose + nicotinamide + L-lysyl-[protein]. Functionally, NAD-dependent protein deacetylase which modulates the activities of several enzymes which are inactive in their acetylated form. The chain is NAD-dependent protein deacetylase from Xanthomonas campestris pv. campestris (strain 8004).